An 82-amino-acid chain; its full sequence is ATP synthase subunit c, chloroplastic (82 aa).

The next 2 helical transmembrane spans lie at 4–24 and 57–77; these read IISA…AIGP and LAFM…LLFA.

This sequence belongs to the ATPase C chain family. F-type ATPases have 2 components, F(1) - the catalytic core - and F(0) - the membrane proton channel. F(1) has five subunits: alpha(3), beta(3), gamma(1), delta(1), epsilon(1). F(0) has four main subunits: a(1), b(1), b'(1) and c(10-14). The alpha and beta chains form an alternating ring which encloses part of the gamma chain. F(1) is attached to F(0) by a central stalk formed by the gamma and epsilon chains, while a peripheral stalk is formed by the delta, b and b' chains.

The protein resides in the plastid. Its subcellular location is the chloroplast thylakoid membrane. In terms of biological role, f(1)F(0) ATP synthase produces ATP from ADP in the presence of a proton or sodium gradient. F-type ATPases consist of two structural domains, F(1) containing the extramembraneous catalytic core and F(0) containing the membrane proton channel, linked together by a central stalk and a peripheral stalk. During catalysis, ATP synthesis in the catalytic domain of F(1) is coupled via a rotary mechanism of the central stalk subunits to proton translocation. Key component of the F(0) channel; it plays a direct role in translocation across the membrane. A homomeric c-ring of between 10-14 subunits forms the central stalk rotor element with the F(1) delta and epsilon subunits. The chain is ATP synthase subunit c, chloroplastic from Antithamnion sp. (Red alga).